Reading from the N-terminus, the 529-residue chain is Peptide chain release factor 3 (529 aa).

The tr-type G domain occupies 10–278 (ARRRTFAIIS…NFVDLAPAPR (269 aa)). Residues 19 to 26 (SHPDAGKT), 87 to 91 (DTPGH), and 141 to 144 (NKLD) each bind GTP.

It belongs to the TRAFAC class translation factor GTPase superfamily. Classic translation factor GTPase family. PrfC subfamily.

It localises to the cytoplasm. Increases the formation of ribosomal termination complexes and stimulates activities of RF-1 and RF-2. It binds guanine nucleotides and has strong preference for UGA stop codons. It may interact directly with the ribosome. The stimulation of RF-1 and RF-2 is significantly reduced by GTP and GDP, but not by GMP. The protein is Peptide chain release factor 3 of Nitratidesulfovibrio vulgaris (strain ATCC 29579 / DSM 644 / CCUG 34227 / NCIMB 8303 / VKM B-1760 / Hildenborough) (Desulfovibrio vulgaris).